The following is a 494-amino-acid chain: ATP synthase subunit beta (494 aa).

Residue 177-184 coordinates ATP; the sequence is GGAGVGKT.

Belongs to the ATPase alpha/beta chains family. In terms of assembly, F-type ATPases have 2 components, CF(1) - the catalytic core - and CF(0) - the membrane proton channel. CF(1) has five subunits: alpha(3), beta(3), gamma(1), delta(1), epsilon(1). CF(0) has three main subunits: a(1), b(2) and c(9-12). The alpha and beta chains form an alternating ring which encloses part of the gamma chain. CF(1) is attached to CF(0) by a central stalk formed by the gamma and epsilon chains, while a peripheral stalk is formed by the delta and b chains.

The protein localises to the cell membrane. It catalyses the reaction ATP + H2O + 4 H(+)(in) = ADP + phosphate + 5 H(+)(out). Functionally, produces ATP from ADP in the presence of a proton gradient across the membrane. The catalytic sites are hosted primarily by the beta subunits. The polypeptide is ATP synthase subunit beta (Bifidobacterium adolescentis (strain ATCC 15703 / DSM 20083 / NCTC 11814 / E194a)).